Here is a 951-residue protein sequence, read N- to C-terminus: Valine--tRNA ligase (951 aa).

The short motif at 42 to 52 is the 'HIGH' region element; the sequence is PNVTGSLHMGH. The 'KMSKS' region motif lies at 554-558; the sequence is KMSKS. Lysine 557 lines the ATP pocket. Positions 880 to 944 form a coiled coil; that stretch reads AGLINKEDEL…AEAKAKLIEQ (65 aa).

Belongs to the class-I aminoacyl-tRNA synthetase family. ValS type 1 subfamily. Monomer.

The protein localises to the cytoplasm. It catalyses the reaction tRNA(Val) + L-valine + ATP = L-valyl-tRNA(Val) + AMP + diphosphate. In terms of biological role, catalyzes the attachment of valine to tRNA(Val). As ValRS can inadvertently accommodate and process structurally similar amino acids such as threonine, to avoid such errors, it has a 'posttransfer' editing activity that hydrolyzes mischarged Thr-tRNA(Val) in a tRNA-dependent manner. This Shigella boydii serotype 4 (strain Sb227) protein is Valine--tRNA ligase.